The sequence spans 82 residues: Defensin-like protein 7 (82 aa).

Residues 1-29 (MKSSTTSMQLIPTLFFLTILLASPEMVEG) form the signal peptide. Residue glutamine 30 is modified to Pyrrolidone carboxylic acid. 4 cysteine pairs are disulfide-bonded: cysteine 33-cysteine 77, cysteine 44-cysteine 64, cysteine 50-cysteine 71, and cysteine 54-cysteine 73.

Belongs to the DEFL family. As to expression, expressed in stems, roots, rosette leaves and flower buds.

It is found in the secreted. This chain is Defensin-like protein 7 (LCR75), found in Arabidopsis thaliana (Mouse-ear cress).